Reading from the N-terminus, the 702-residue chain is Elongation factor G (702 aa).

The region spanning 9 to 292 (DRTRNIGIMA…AVVDYLPSPL (284 aa)) is the tr-type G domain. Residues 18–25 (AHIDAGKT), 91–95 (DTPGH), and 145–148 (NKMD) each bind GTP.

This sequence belongs to the TRAFAC class translation factor GTPase superfamily. Classic translation factor GTPase family. EF-G/EF-2 subfamily.

Its subcellular location is the cytoplasm. Functionally, catalyzes the GTP-dependent ribosomal translocation step during translation elongation. During this step, the ribosome changes from the pre-translocational (PRE) to the post-translocational (POST) state as the newly formed A-site-bound peptidyl-tRNA and P-site-bound deacylated tRNA move to the P and E sites, respectively. Catalyzes the coordinated movement of the two tRNA molecules, the mRNA and conformational changes in the ribosome. The chain is Elongation factor G from Oenococcus oeni (strain ATCC BAA-331 / PSU-1).